Consider the following 491-residue polypeptide: Cytochrome P450 2B9 (491 aa).

Residue Ser-128 is modified to Phosphoserine; by PKA. Cys-436 contributes to the heme binding site.

This sequence belongs to the cytochrome P450 family. The cofactor is heme.

Its subcellular location is the endoplasmic reticulum membrane. It is found in the microsome membrane. It catalyses the reaction an organic molecule + reduced [NADPH--hemoprotein reductase] + O2 = an alcohol + oxidized [NADPH--hemoprotein reductase] + H2O + H(+). Functionally, cytochromes P450 are a group of heme-thiolate monooxygenases. In liver microsomes, this enzyme is involved in an NADPH-dependent electron transport pathway. It oxidizes a variety of structurally unrelated compounds, including steroids, fatty acids, and xenobiotics. The sequence is that of Cytochrome P450 2B9 (Cyp2b9) from Mus musculus (Mouse).